Consider the following 365-residue polypeptide: Protein Tob1 (365 aa).

Positions 22-39 (RRRVNIFGEELERLLKQK) match the Bipartite nuclear localization signal motif. Residues 82-92 (VRGNLPQDLSV) form an important for nuclear localization region. The segment covering 144 to 160 (DPASSVSSSPSPPFGHS) has biased composition (low complexity). Positions 144-171 (DPASSVSSSPSPPFGHSAAVSPTFMPRS) are disordered. A required for interaction with CPEB3 region spans residues 161–220 (AAVSPTFMPRSTQPLTFTTATFAATKFGSTKMKNSGRSSKVARTSPISLGLNVNVNDLLK). Threonine 204 bears the Phosphothreonine mark. The short motif at 228–236 (MHSLYGLGL) is the Nuclear export signal element. The interval 233 to 287 (GLGLGSQQQPQPQPQQPPSQPPPPPPPPQQQQQHQQQQQQQQQQQQQPQQQTSAL) is disordered. Over residues 243–261 (QPQPQQPPSQPPPPPPPPQ) the composition is skewed to pro residues. The segment covering 262-283 (QQQQHQQQQQQQQQQQQQPQQQ) has biased composition (low complexity).

Belongs to the BTG family. In terms of assembly, interacts with ERBB2. Interacts with CNOT7. Interacts with CPEB3 (via C-terminal RNA-binding region); recruits CNOT7 to CPEB3 to form a ternary complex required for mRNA deadenylation and decay. Interacts with CNOT8. Interacts with CPEB4. In terms of processing, phosphorylated on Ser and Thr residues.

Its subcellular location is the cytoplasm. It is found in the nucleus. Anti-proliferative protein; the function is mediated by association with deadenylase subunits of the CCR4-NOT complex. Mediates CPEB3-accelerated mRNA deadenylation by binding to CPEB3 and recruiting CNOT7 which leads to target mRNA deadenylation and decay. This chain is Protein Tob1 (Tob1), found in Rattus norvegicus (Rat).